Here is a 1486-residue protein sequence, read N- to C-terminus: MIERGKFRSLTLINWNGFFARTFDLDELVTTLSGGNGAGKSTTMAAFVTALIPDLTLLHFRNTTEAGATSGSRDKGLHGKLKAGVCYSMLDTINSRHQRVVVGVRLQQVAGRDRKVDIKPFAIQGLPMSVQPTQLVTETLNERQARVLPLNELKDKLEAMEGVQFKQFNSITDYHSLMFDLGIIARRLRSASDRSKFYRLIEASLYGGISSAITRSLRDYLLPENSGVRKAFQDMEAALRENRMTLEAIRVTQSDRDLFKHLISEATNYVAADYMRHANERRVHLDKALEFRRELHTSRQQLAAEQYKHVDMARELAEHNGAEGDLEADYQAASDHLNLVQTALRQQEKIERYEADLDELQIRLEEQNEVVAEAIERQEENEARAEAAELEVDELKSQLADYQQALDVQQTRAIQYNQAIAALNRAKELCHLPDLTADSAAEWLETFQAKELEATEKMLSLEQKMSMAQTAHSQFEQAYQLVVAINGPLARNEAWDVARELLREGVDQRHLAEQVQPLRMRLSELEQRLREQQEAERLLADFCKRQGKNFDIDELEALHQELEARIASLSDSVSNAREERMALRQEQEQLQSRIQSLMQRAPVWLAAQNSLNQLSEQCGEEFSSSQDVTEYLQQLLEREREAIVERDEVGARKNAVDEEIERLSQPGGSEDQRLNALAERFGGVLLSEIYDDVSLEDAPYFSALYGPSRHAIVVPDLSQVTEHLEGLTDCPEDLYLIEGDPQSFDDSVFSVDELEKAVVVKIADRQWRYSRFPEVPLFGRAARESRIESLHAEREVLSERFATLSFDVQKTQRLHQAFSRFIGSHLAVAFESDPEAEIRQLNSRRVELERALSNHENDNQQQRIQFEQAKEGVTALNRILPRLNLLADDSLADRVDEIRERLDEAQEAARFVQQFGNQLAKLEPIVSVLQSDPEQFEQLKEDYAYSQQMQRDARQQAFALTEVVQRRAHFSYSDSAEMLSGNSDLNEKLRERLEQAEAERTRAREALRGHAVQLNQYNQVLASLKSSYDTKKELLNDLQRELQDIGVRADSGAEERARIRRDELHAQLSNNRSRRNQLEKALTFCEAEMDNLTRKLRKLERDYFEMREQVVTAKAGWCAVMRMVKDNGVERRLHRRELAYLSADDLRSMSDKALGALRLAVADNEHLRDVLRMSEDPKRPERKIQFFVAVYQHLRERIRQDIIRTDDPVEAIEQMEIELSRLTEELTSREQKLAISSRSVANIIRKTIQREQNRIRMLNQGLQNVSFGQVNSVRLNVNVRETHAMLLDVLSEQHEQHQDLFNSNRLTFSEALAKLYQRLNPQIDMGQRTPQTIGEELLDYRNYLEMEVEVNRGSDGWLRAESGALSTGEAIGTGMSILVMVVQSWEDESRRLRGKDISPCRLLFLDEAARLDARSIATLFELCERLQMQLIIAAPENISPEKGTTYKLVRKVFQNTEHVHVVGLRGFAPQLPETLPGSDEAPSQAS.

ATP is bound at residue 34 to 41 (GGNGAGKS). Coiled coils occupy residues 326–418 (LEAD…QYNQ), 444–480 (LETF…QAYQ), and 509–603 (RHLA…RAPV). The segment at 666–783 (PGGSEDQRLN…EVPLFGRAAR (118 aa)) is flexible hinge. 3 coiled-coil regions span residues 835–923 (EAEI…AKLE), 977–1115 (EMLS…TAKA), and 1209–1266 (VEAI…QNVS).

It belongs to the SMC family. MukB subfamily. In terms of assembly, homodimerization via its hinge domain. Binds to DNA via its C-terminal region. Interacts, and probably forms a ternary complex, with MukE and MukF via its C-terminal region. The complex formation is stimulated by calcium or magnesium. Interacts with tubulin-related protein FtsZ.

Its subcellular location is the cytoplasm. It is found in the nucleoid. Its function is as follows. Plays a central role in chromosome condensation, segregation and cell cycle progression. Functions as a homodimer, which is essential for chromosome partition. Involved in negative DNA supercoiling in vivo, and by this means organize and compact chromosomes. May achieve or facilitate chromosome segregation by condensation DNA from both sides of a centrally located replisome during cell division. The protein is Chromosome partition protein MukB of Escherichia coli O81 (strain ED1a).